The following is a 407-amino-acid chain: Phosphopentomutase (407 aa).

Mn(2+)-binding residues include aspartate 10, aspartate 306, histidine 311, aspartate 347, histidine 348, and histidine 359.

The protein belongs to the phosphopentomutase family. It depends on Mn(2+) as a cofactor.

It is found in the cytoplasm. The catalysed reaction is 2-deoxy-alpha-D-ribose 1-phosphate = 2-deoxy-D-ribose 5-phosphate. The enzyme catalyses alpha-D-ribose 1-phosphate = D-ribose 5-phosphate. The protein operates within carbohydrate degradation; 2-deoxy-D-ribose 1-phosphate degradation; D-glyceraldehyde 3-phosphate and acetaldehyde from 2-deoxy-alpha-D-ribose 1-phosphate: step 1/2. In terms of biological role, isomerase that catalyzes the conversion of deoxy-ribose 1-phosphate (dRib-1-P) and ribose 1-phosphate (Rib-1-P) to deoxy-ribose 5-phosphate (dRib-5-P) and ribose 5-phosphate (Rib-5-P), respectively. The sequence is that of Phosphopentomutase from Buchnera aphidicola subsp. Acyrthosiphon pisum (strain APS) (Acyrthosiphon pisum symbiotic bacterium).